The sequence spans 98 residues: Large ribosomal subunit protein uL23 (98 aa).

The protein belongs to the universal ribosomal protein uL23 family. As to quaternary structure, part of the 50S ribosomal subunit. Contacts protein L29, and trigger factor when it is bound to the ribosome.

Functionally, one of the early assembly proteins it binds 23S rRNA. One of the proteins that surrounds the polypeptide exit tunnel on the outside of the ribosome. Forms the main docking site for trigger factor binding to the ribosome. The protein is Large ribosomal subunit protein uL23 of Rickettsia bellii (strain OSU 85-389).